The following is a 340-amino-acid chain: Ketol-acid reductoisomerase (NADP(+)) (340 aa).

The 182-residue stretch at 1 to 182 folds into the KARI N-terminal Rossmann domain; sequence MRVYYDRDCD…GGGRSGIIET (182 aa). NADP(+) is bound by residues 24-27, Arg-48, Ser-51, Ser-53, and 83-86; these read YGSQ and DELQ. His-108 is an active-site residue. Gly-134 lines the NADP(+) pocket. One can recognise a KARI C-terminal knotted domain in the interval 183–329; the sequence is NFREECETDL…KELRGMMPWI (147 aa). Mg(2+)-binding residues include Asp-191, Glu-195, Glu-227, and Glu-231. Ser-252 is a binding site for substrate.

It belongs to the ketol-acid reductoisomerase family. The cofactor is Mg(2+).

The enzyme catalyses (2R)-2,3-dihydroxy-3-methylbutanoate + NADP(+) = (2S)-2-acetolactate + NADPH + H(+). It catalyses the reaction (2R,3R)-2,3-dihydroxy-3-methylpentanoate + NADP(+) = (S)-2-ethyl-2-hydroxy-3-oxobutanoate + NADPH + H(+). Its pathway is amino-acid biosynthesis; L-isoleucine biosynthesis; L-isoleucine from 2-oxobutanoate: step 2/4. It functions in the pathway amino-acid biosynthesis; L-valine biosynthesis; L-valine from pyruvate: step 2/4. Its function is as follows. Involved in the biosynthesis of branched-chain amino acids (BCAA). Catalyzes an alkyl-migration followed by a ketol-acid reduction of (S)-2-acetolactate (S2AL) to yield (R)-2,3-dihydroxy-isovalerate. In the isomerase reaction, S2AL is rearranged via a Mg-dependent methyl migration to produce 3-hydroxy-3-methyl-2-ketobutyrate (HMKB). In the reductase reaction, this 2-ketoacid undergoes a metal-dependent reduction by NADPH to yield (R)-2,3-dihydroxy-isovalerate. This Dinoroseobacter shibae (strain DSM 16493 / NCIMB 14021 / DFL 12) protein is Ketol-acid reductoisomerase (NADP(+)).